The primary structure comprises 183 residues: ATP synthase subunit b 2 (183 aa).

The helical transmembrane segment at 27 to 47 (PSFYAFLALLIFFGLLLHMGV) threads the bilayer.

The protein belongs to the ATPase B chain family. In terms of assembly, F-type ATPases have 2 components, F(1) - the catalytic core - and F(0) - the membrane proton channel. F(1) has five subunits: alpha(3), beta(3), gamma(1), delta(1), epsilon(1). F(0) has three main subunits: a(1), b(2) and c(10-14). The alpha and beta chains form an alternating ring which encloses part of the gamma chain. F(1) is attached to F(0) by a central stalk formed by the gamma and epsilon chains, while a peripheral stalk is formed by the delta and b chains.

It localises to the cell inner membrane. Its function is as follows. F(1)F(0) ATP synthase produces ATP from ADP in the presence of a proton or sodium gradient. F-type ATPases consist of two structural domains, F(1) containing the extramembraneous catalytic core and F(0) containing the membrane proton channel, linked together by a central stalk and a peripheral stalk. During catalysis, ATP synthesis in the catalytic domain of F(1) is coupled via a rotary mechanism of the central stalk subunits to proton translocation. Functionally, component of the F(0) channel, it forms part of the peripheral stalk, linking F(1) to F(0). The sequence is that of ATP synthase subunit b 2 from Maricaulis maris (strain MCS10) (Caulobacter maris).